Reading from the N-terminus, the 221-residue chain is Serine/arginine-rich splicing factor 9 (221 aa).

RRM domains follow at residues 14–89 and 111–187; these read GRIY…FPRA and FRVL…PERG. Lys36 is covalently cross-linked (Glycyl lysine isopeptide (Lys-Gly) (interchain with G-Cter in SUMO2)). Residues 187–198 show a composition bias toward low complexity; that stretch reads GTSYGCSRSRSG. The segment at 187 to 221 is disordered; that stretch reads GTSYGCSRSRSGSRGRDSPYQSRGSPHYFSPFRPY. An interaction with SAFB1 region spans residues 188-200; it reads TSYGCSRSRSGSR. A phosphoserine mark is found at Ser189, Ser193, Ser195, Ser204, Ser208, and Ser211. Tyr214 carries the post-translational modification Phosphotyrosine. The residue at position 216 (Ser216) is a Phosphoserine.

This sequence belongs to the splicing factor SR family. As to quaternary structure, interacts with KHDRBS3. Interacts with HABP4. Interacts with NOL3/ARC/NOP30. Interacts with NSEP1/YB-1/YB1. Interacts with SAFB/SAFB1. Interacts with SRSF6/SFRS6. Interacts with TRA2B/SFRS10. Interacts with C1QBP. May also interact with DUSP11/PIR1. Extensively phosphorylated on serine residues in the RS domain.

It is found in the nucleus. Its function is as follows. Plays a role in constitutive splicing and can modulate the selection of alternative splice sites. Represses the splicing of MAPT/Tau exon 10. This Rattus norvegicus (Rat) protein is Serine/arginine-rich splicing factor 9 (Srsf9).